A 348-amino-acid chain; its full sequence is Sec-independent protein translocase protein TatC (348 aa).

A run of 6 helical transmembrane segments spans residues 7–27, 162–182, 192–212, 244–264, 278–298, and 299–319; these read LCLT…MDIL, VVIS…PGLL, CMAV…FIVL, MILM…FVKL, YAIV…DVAT, and MMLM…LAWM.

Belongs to the TatC family. As to quaternary structure, forms a complex with TatA.

The protein localises to the cell membrane. Functionally, part of the twin-arginine translocation (Tat) system that transports large folded proteins containing a characteristic twin-arginine motif in their signal peptide across membranes. In Akkermansia muciniphila (strain ATCC BAA-835 / DSM 22959 / JCM 33894 / BCRC 81048 / CCUG 64013 / CIP 107961 / Muc), this protein is Sec-independent protein translocase protein TatC.